A 340-amino-acid polypeptide reads, in one-letter code: Arginase 1, mitochondrial (340 aa).

A mitochondrion-targeting transit peptide spans 1-24; it reads MGGVAAGTRWIHHVRRLSAAKVSA. 4 residues coordinate Mn(2+): His-159, Asp-183, His-185, and Asp-187. Substrate is bound by residues 185 to 189 and 193 to 195; these read HPDIY and EGN. Mn(2+)-binding residues include Asp-268 and Asp-270. Substrate is bound at residue Glu-311.

This sequence belongs to the arginase family. The cofactor is Mn(2+).

It is found in the mitochondrion. The catalysed reaction is L-arginine + H2O = urea + L-ornithine. It functions in the pathway nitrogen metabolism; urea cycle; L-ornithine and urea from L-arginine: step 1/1. Its function is as follows. Catalyzes the hydrolysis of L-arginine to urea and L-ornithine. The latter can be utilized in the urea cycle or as a precursor for the synthesis of both polyamines and proline. The protein is Arginase 1, mitochondrial (ARG1) of Oryza sativa subsp. japonica (Rice).